The primary structure comprises 418 residues: Histidine--tRNA ligase (418 aa).

Belongs to the class-II aminoacyl-tRNA synthetase family. As to quaternary structure, homodimer.

It is found in the cytoplasm. The enzyme catalyses tRNA(His) + L-histidine + ATP = L-histidyl-tRNA(His) + AMP + diphosphate + H(+). This Thermosipho africanus (strain TCF52B) protein is Histidine--tRNA ligase.